We begin with the raw amino-acid sequence, 336 residues long: MSLKAIATTLGISVTTVSRALGGFSDVAASTRERVEAEARRRGYRPNTQARRLKTGKTDAIGLVYPENDVPFNSGVFMDMVSCISRELAYHDIDLLLIADDEHADCHSYMRLVESRRIDALIIAHTLDDDPRITHLHKAGIPFLALGRVPQGLPCAWFDFDNHAGTWQATQKLIALGHKSIALLSENTSHSYVIARRQGWLDALHEHGLKDPLLRLVSPTRRAGYLAVMELMSLPAPPTAIITDNDLSGDGAAMALQLRGRLSGKEAVSLVVYDGLPQDSIIELDVAAVIQSTRSLVGRQISDMVYQIINGASPESLQITWTPIFYPGSTVHSPSF.

Residues 2-55 (SLKAIATTLGISVTTVSRALGGFSDVAASTRERVEAEARRRGYRPNTQARRLKT) enclose the HTH lacI-type domain. Residues 3-22 (LKAIATTLGISVTTVSRALG) constitute a DNA-binding region (H-T-H motif).

As to quaternary structure, homodimer.

Functionally, repressor that negatively controls the expression of the raffinose (raf) operon by binding to the raf operator (rafO) DNA. Acts by binding to two operator sites, O1 and 02, which flank the -35 raf promoter box. RafR bound to 02 alone results in 45 % repression of transcription, whereas RafR bound to O1 leads to only 6% repression. This chain is HTH-type transcriptional regulator RafR, found in Escherichia coli.